The primary structure comprises 150 residues: Heat shock protein beta-3 (150 aa).

The 104-residue stretch at 47–150 folds into the sHSP domain; the sequence is KTRAAQSPPV…VEVKDPVGTK (104 aa).

The protein belongs to the small heat shock protein (HSP20) family.

Its subcellular location is the cytoplasm. It localises to the nucleus. Functionally, inhibitor of actin polymerization. The protein is Heat shock protein beta-3 (HSPB3) of Homo sapiens (Human).